Consider the following 1004-residue polypeptide: 2-oxoglutarate dehydrogenase E1 component (1004 aa).

This sequence belongs to the alpha-ketoglutarate dehydrogenase family. In terms of assembly, homodimer. Part of the 2-oxoglutarate dehydrogenase (OGDH) complex composed of E1 (2-oxoglutarate dehydrogenase), E2 (dihydrolipoamide succinyltransferase) and E3 (dihydrolipoamide dehydrogenase); the complex contains multiple copies of the three enzymatic components (E1, E2 and E3). Thiamine diphosphate is required as a cofactor.

The enzyme catalyses N(6)-[(R)-lipoyl]-L-lysyl-[protein] + 2-oxoglutarate + H(+) = N(6)-[(R)-S(8)-succinyldihydrolipoyl]-L-lysyl-[protein] + CO2. E1 component of the 2-oxoglutarate dehydrogenase (OGDH) complex which catalyzes the decarboxylation of 2-oxoglutarate, the first step in the conversion of 2-oxoglutarate to succinyl-CoA and CO(2). The sequence is that of 2-oxoglutarate dehydrogenase E1 component from Brucella suis (strain ATCC 23445 / NCTC 10510).